A 184-amino-acid polypeptide reads, in one-letter code: Protein GrpE (184 aa).

Residues 1–35 (MTQENQNPPPEQEDVAADPQVNEAAASEPAAVKTP) are disordered.

Belongs to the GrpE family. Homodimer.

The protein resides in the cytoplasm. Its function is as follows. Participates actively in the response to hyperosmotic and heat shock by preventing the aggregation of stress-denatured proteins, in association with DnaK and GrpE. It is the nucleotide exchange factor for DnaK and may function as a thermosensor. Unfolded proteins bind initially to DnaJ; upon interaction with the DnaJ-bound protein, DnaK hydrolyzes its bound ATP, resulting in the formation of a stable complex. GrpE releases ADP from DnaK; ATP binding to DnaK triggers the release of the substrate protein, thus completing the reaction cycle. Several rounds of ATP-dependent interactions between DnaJ, DnaK and GrpE are required for fully efficient folding. This is Protein GrpE from Polynucleobacter asymbioticus (strain DSM 18221 / CIP 109841 / QLW-P1DMWA-1) (Polynucleobacter necessarius subsp. asymbioticus).